We begin with the raw amino-acid sequence, 277 residues long: uncharacterized protein (277 aa).

The interval 1–20 is disordered; the sequence is MVTTSPPPTLTNSVQPHPTT.

This is an uncharacterized protein from Acidianus convivator (ATV).